The chain runs to 341 residues: Porin-like protein L (341 aa).

The N-terminal stretch at 1-21 is a signal peptide; it reads MNKKLIALAVAAASISSVATA.

This sequence belongs to the Gram-negative porin family. Homotrimer.

The protein localises to the cell outer membrane. Forms pores that allow passive diffusion of small molecules across the outer membrane. This chain is Porin-like protein L (ompL), found in Photobacterium profundum (strain SS9).